A 218-amino-acid chain; its full sequence is Pyridoxine/pyridoxamine 5'-phosphate oxidase (218 aa).

Substrate contacts are provided by residues arginine 14–tyrosine 17 and lysine 72. FMN-binding positions include arginine 67–lysine 72, tyrosine 82–threonine 83, arginine 88, lysine 89, and glutamine 111. Substrate-binding residues include tyrosine 129, arginine 133, and serine 137. FMN contacts are provided by residues glutamine 146 to serine 147 and tryptophan 191. Arginine 197–histidine 199 is a substrate binding site. Arginine 201 lines the FMN pocket.

Belongs to the pyridoxamine 5'-phosphate oxidase family. Homodimer. Requires FMN as cofactor.

It carries out the reaction pyridoxamine 5'-phosphate + O2 + H2O = pyridoxal 5'-phosphate + H2O2 + NH4(+). It catalyses the reaction pyridoxine 5'-phosphate + O2 = pyridoxal 5'-phosphate + H2O2. Its pathway is cofactor metabolism; pyridoxal 5'-phosphate salvage; pyridoxal 5'-phosphate from pyridoxamine 5'-phosphate: step 1/1. It functions in the pathway cofactor metabolism; pyridoxal 5'-phosphate salvage; pyridoxal 5'-phosphate from pyridoxine 5'-phosphate: step 1/1. Catalyzes the oxidation of either pyridoxine 5'-phosphate (PNP) or pyridoxamine 5'-phosphate (PMP) into pyridoxal 5'-phosphate (PLP). This chain is Pyridoxine/pyridoxamine 5'-phosphate oxidase, found in Cronobacter sakazakii (strain ATCC BAA-894) (Enterobacter sakazakii).